The sequence spans 692 residues: Elongation factor G (692 aa).

Residues E9–V284 enclose the tr-type G domain. GTP is bound by residues A18–T25, D82–H86, and N136–D139.

Belongs to the TRAFAC class translation factor GTPase superfamily. Classic translation factor GTPase family. EF-G/EF-2 subfamily.

Its subcellular location is the cytoplasm. In terms of biological role, catalyzes the GTP-dependent ribosomal translocation step during translation elongation. During this step, the ribosome changes from the pre-translocational (PRE) to the post-translocational (POST) state as the newly formed A-site-bound peptidyl-tRNA and P-site-bound deacylated tRNA move to the P and E sites, respectively. Catalyzes the coordinated movement of the two tRNA molecules, the mRNA and conformational changes in the ribosome. This is Elongation factor G from Neorickettsia sennetsu (strain ATCC VR-367 / Miyayama) (Ehrlichia sennetsu).